Consider the following 231-residue polypeptide: 5'-methylthioadenosine/S-adenosylhomocysteine nucleosidase (231 aa).

Catalysis depends on glutamate 12, which acts as the Proton acceptor. Substrate is bound by residues glycine 78, methionine 153, and 174–175; that span reads ME. Catalysis depends on aspartate 198, which acts as the Proton donor.

It belongs to the PNP/UDP phosphorylase family. MtnN subfamily.

It catalyses the reaction S-adenosyl-L-homocysteine + H2O = S-(5-deoxy-D-ribos-5-yl)-L-homocysteine + adenine. The enzyme catalyses S-methyl-5'-thioadenosine + H2O = 5-(methylsulfanyl)-D-ribose + adenine. It carries out the reaction 5'-deoxyadenosine + H2O = 5-deoxy-D-ribose + adenine. It functions in the pathway amino-acid biosynthesis; L-methionine biosynthesis via salvage pathway; S-methyl-5-thio-alpha-D-ribose 1-phosphate from S-methyl-5'-thioadenosine (hydrolase route): step 1/2. Catalyzes the irreversible cleavage of the glycosidic bond in both 5'-methylthioadenosine (MTA) and S-adenosylhomocysteine (SAH/AdoHcy) to adenine and the corresponding thioribose, 5'-methylthioribose and S-ribosylhomocysteine, respectively. Also cleaves 5'-deoxyadenosine, a toxic by-product of radical S-adenosylmethionine (SAM) enzymes, into 5-deoxyribose and adenine. This chain is 5'-methylthioadenosine/S-adenosylhomocysteine nucleosidase, found in Bacillus licheniformis (strain ATCC 14580 / DSM 13 / JCM 2505 / CCUG 7422 / NBRC 12200 / NCIMB 9375 / NCTC 10341 / NRRL NRS-1264 / Gibson 46).